The following is a 407-amino-acid chain: Na(+)-translocating NADH-quinone reductase subunit F (407 aa).

Residues 3–23 (ITLGIAMFTVIVLALAVLILF) form a helical membrane-spanning segment. The 95-residue stretch at 32-126 (GDITIEINDD…SMKIELPEEV (95 aa)) folds into the 2Fe-2S ferredoxin-type domain. Residues C69, C75, C78, and C110 each coordinate [2Fe-2S] cluster. One can recognise an FAD-binding FR-type domain in the interval 129 to 269 (VKKWECTVIS…SGPFGEFFAK (141 aa)).

It belongs to the NqrF family. As to quaternary structure, composed of six subunits; NqrA, NqrB, NqrC, NqrD, NqrE and NqrF. It depends on [2Fe-2S] cluster as a cofactor. Requires FAD as cofactor.

It is found in the cell inner membrane. It catalyses the reaction a ubiquinone + n Na(+)(in) + NADH + H(+) = a ubiquinol + n Na(+)(out) + NAD(+). In terms of biological role, NQR complex catalyzes the reduction of ubiquinone-1 to ubiquinol by two successive reactions, coupled with the transport of Na(+) ions from the cytoplasm to the periplasm. The first step is catalyzed by NqrF, which accepts electrons from NADH and reduces ubiquinone-1 to ubisemiquinone by a one-electron transfer pathway. The polypeptide is Na(+)-translocating NADH-quinone reductase subunit F (Histophilus somni (strain 129Pt) (Haemophilus somnus)).